Here is a 264-residue protein sequence, read N- to C-terminus: tRNA (guanine-N(1)-)-methyltransferase (264 aa).

S-adenosyl-L-methionine-binding positions include Gly-120 and 140–145 (IGDYVL).

Belongs to the RNA methyltransferase TrmD family. In terms of assembly, homodimer.

The protein localises to the cytoplasm. It catalyses the reaction guanosine(37) in tRNA + S-adenosyl-L-methionine = N(1)-methylguanosine(37) in tRNA + S-adenosyl-L-homocysteine + H(+). In terms of biological role, specifically methylates guanosine-37 in various tRNAs. The chain is tRNA (guanine-N(1)-)-methyltransferase from Halorhodospira halophila (strain DSM 244 / SL1) (Ectothiorhodospira halophila (strain DSM 244 / SL1)).